Reading from the N-terminus, the 120-residue chain is UPF0102 protein FRAAL5785 (120 aa).

The protein belongs to the UPF0102 family.

The chain is UPF0102 protein FRAAL5785 from Frankia alni (strain DSM 45986 / CECT 9034 / ACN14a).